The chain runs to 326 residues: MSSENNAGANLVNQFNAAGELTHLLTLEGLPKEQILHILDTAQQFVSVTDPSREVKKVPLLRGKSVFNLFFENSTRTRTTFEIAAKRLSADVINLDISTSSTAKGESLLDTIDNLVAMQADIFVVRHSVSRAPIEIANHVPTHVHVVNAGDGSHQHPTQGLLDMYTMRHFKQNFKGLKVAIVGDIVHSRVAKSNIHALTTLGCEDIRVIGPESLLPSDLDMLGVKVYHSMEEGLKDVDVVMTLRIQKERMEAGQVPEGDAFFNQYGLTPTRLALAKSDAIVMHPGPMNRGVEIDSVVADGPQSVILNQVTFGIAVRMAVMSIVAGN.

The carbamoyl phosphate site is built by Arg76 and Thr77. Position 104 (Lys104) interacts with L-aspartate. The carbamoyl phosphate site is built by Arg126, His156, and Gln159. Positions 189 and 244 each coordinate L-aspartate. Carbamoyl phosphate contacts are provided by Gly285 and Pro286.

This sequence belongs to the aspartate/ornithine carbamoyltransferase superfamily. ATCase family. As to quaternary structure, heterododecamer (2C3:3R2) of six catalytic PyrB chains organized as two trimers (C3), and six regulatory PyrI chains organized as three dimers (R2).

The enzyme catalyses carbamoyl phosphate + L-aspartate = N-carbamoyl-L-aspartate + phosphate + H(+). It functions in the pathway pyrimidine metabolism; UMP biosynthesis via de novo pathway; (S)-dihydroorotate from bicarbonate: step 2/3. Functionally, catalyzes the condensation of carbamoyl phosphate and aspartate to form carbamoyl aspartate and inorganic phosphate, the committed step in the de novo pyrimidine nucleotide biosynthesis pathway. The protein is Aspartate carbamoyltransferase catalytic subunit of Polynucleobacter asymbioticus (strain DSM 18221 / CIP 109841 / QLW-P1DMWA-1) (Polynucleobacter necessarius subsp. asymbioticus).